Consider the following 71-residue polypeptide: Sec-independent protein translocase protein TatA (71 aa).

A helical membrane pass occupies residues 1 to 21 (MGSFSMWHWLIVLAIVLLLFG). Residues 40–71 (KKGMSDDDTAPDGTPKPADQSKTVDHRADDHK) form a disordered region. The span at 61–71 (KTVDHRADDHK) shows a compositional bias: basic and acidic residues.

This sequence belongs to the TatA/E family. The Tat system comprises two distinct complexes: a TatABC complex, containing multiple copies of TatA, TatB and TatC subunits, and a separate TatA complex, containing only TatA subunits. Substrates initially bind to the TatABC complex, which probably triggers association of the separate TatA complex to form the active translocon.

The protein localises to the cell inner membrane. In terms of biological role, part of the twin-arginine translocation (Tat) system that transports large folded proteins containing a characteristic twin-arginine motif in their signal peptide across membranes. TatA could form the protein-conducting channel of the Tat system. The polypeptide is Sec-independent protein translocase protein TatA (Allorhizobium ampelinum (strain ATCC BAA-846 / DSM 112012 / S4) (Agrobacterium vitis (strain S4))).